Here is a 213-residue protein sequence, read N- to C-terminus: Insulin-like peptide INSL6 (213 aa).

A signal peptide spans methionine 1–serine 20. 3 disulfides stabilise this stretch: cysteine 33-cysteine 179, cysteine 45-cysteine 192, and cysteine 178-cysteine 183. A propeptide spans phenylalanine 55 to glutamine 168 (connecting peptide). Residues leucine 201–tyrosine 213 constitute a propeptide that is removed on maturation.

Belongs to the insulin family. In terms of tissue distribution, testis specific.

Its subcellular location is the secreted. Its function is as follows. May have a role in sperm development and fertilization. The protein is Insulin-like peptide INSL6 (INSL6) of Homo sapiens (Human).